Consider the following 335-residue polypeptide: Nucleoid-associated protein YejK (335 aa).

The protein belongs to the YejK family.

The protein localises to the cytoplasm. The protein resides in the nucleoid. This chain is Nucleoid-associated protein YejK, found in Escherichia coli (strain K12 / MC4100 / BW2952).